Consider the following 273-residue polypeptide: Tyrosinase (273 aa).

The signal sequence occupies residues 1–18; sequence MLLFTMGLLLAILQPSTG. Residues asparagine 86, asparagine 111, and asparagine 161 are each glycosylated (N-linked (GlcNAc...) asparagine). Residues histidine 180, histidine 202, and histidine 211 each coordinate Cu cation. N-linked (GlcNAc...) asparagine glycosylation occurs at asparagine 230.

This sequence belongs to the tyrosinase family. Requires Cu(2+) as cofactor.

It is found in the melanosome membrane. The protein localises to the melanosome. It catalyses the reaction 2 L-dopa + O2 = 2 L-dopaquinone + 2 H2O. It carries out the reaction L-tyrosine + O2 = L-dopaquinone + H2O. Functionally, this is a copper-containing oxidase that functions in the formation of pigments such as melanins and other polyphenolic compounds. Catalyzes the initial and rate limiting step in the cascade of reactions leading to melanin production from tyrosine. In addition to hydroxylating tyrosine to DOPA (3,4-dihydroxyphenylalanine), also catalyzes the oxidation of DOPA to DOPA-quinone, and possibly the oxidation of DHI (5,6-dihydroxyindole) to indole-5,6 quinone. The polypeptide is Tyrosinase (TYR) (Coturnix japonica (Japanese quail)).